The following is a 444-amino-acid chain: Phosphoglucosamine mutase (444 aa).

The Phosphoserine intermediate role is filled by serine 102. Mg(2+)-binding residues include serine 102, aspartate 239, aspartate 241, and aspartate 243. Serine 102 is modified (phosphoserine).

The protein belongs to the phosphohexose mutase family. Mg(2+) serves as cofactor. Activated by phosphorylation.

The enzyme catalyses alpha-D-glucosamine 1-phosphate = D-glucosamine 6-phosphate. In terms of biological role, catalyzes the conversion of glucosamine-6-phosphate to glucosamine-1-phosphate. The protein is Phosphoglucosamine mutase of Saccharopolyspora erythraea (strain ATCC 11635 / DSM 40517 / JCM 4748 / NBRC 13426 / NCIMB 8594 / NRRL 2338).